We begin with the raw amino-acid sequence, 126 residues long: Holo-[acyl-carrier-protein] synthase (126 aa).

The Mg(2+) site is built by D9 and E58.

The protein belongs to the P-Pant transferase superfamily. AcpS family. The cofactor is Mg(2+).

The protein localises to the cytoplasm. It catalyses the reaction apo-[ACP] + CoA = holo-[ACP] + adenosine 3',5'-bisphosphate + H(+). Its function is as follows. Transfers the 4'-phosphopantetheine moiety from coenzyme A to a Ser of acyl-carrier-protein. This chain is Holo-[acyl-carrier-protein] synthase, found in Aliivibrio salmonicida (strain LFI1238) (Vibrio salmonicida (strain LFI1238)).